A 250-amino-acid polypeptide reads, in one-letter code: Ubiquinone/menaquinone biosynthesis C-methyltransferase UbiE (250 aa).

S-adenosyl-L-methionine-binding positions include serine 73, aspartate 94, and 122–123; that span reads NA.

This sequence belongs to the class I-like SAM-binding methyltransferase superfamily. MenG/UbiE family.

It carries out the reaction a 2-demethylmenaquinol + S-adenosyl-L-methionine = a menaquinol + S-adenosyl-L-homocysteine + H(+). The enzyme catalyses a 2-methoxy-6-(all-trans-polyprenyl)benzene-1,4-diol + S-adenosyl-L-methionine = a 5-methoxy-2-methyl-3-(all-trans-polyprenyl)benzene-1,4-diol + S-adenosyl-L-homocysteine + H(+). It participates in quinol/quinone metabolism; menaquinone biosynthesis; menaquinol from 1,4-dihydroxy-2-naphthoate: step 2/2. Its pathway is cofactor biosynthesis; ubiquinone biosynthesis. Methyltransferase required for the conversion of demethylmenaquinol (DMKH2) to menaquinol (MKH2) and the conversion of 2-polyprenyl-6-methoxy-1,4-benzoquinol (DDMQH2) to 2-polyprenyl-3-methyl-6-methoxy-1,4-benzoquinol (DMQH2). The polypeptide is Ubiquinone/menaquinone biosynthesis C-methyltransferase UbiE (Legionella pneumophila (strain Corby)).